We begin with the raw amino-acid sequence, 146 residues long: Hemoglobin subunit beta (146 aa).

Residue Val-1 is modified to N-acetylvaline. Residues 2–146 (HLTDAEKAAI…VASALAHKYH (145 aa)) form the Globin domain. His-63 provides a ligand contact to heme b. Lys-82 carries the N6-acetyllysine modification. His-92 lines the heme b pocket. The residue at position 93 (Cys-93) is an S-nitrosocysteine. Lys-144 is modified (N6-acetyllysine).

The protein belongs to the globin family. Heterotetramer of two alpha chains and two beta chains. In terms of tissue distribution, red blood cells.

Involved in oxygen transport from the lung to the various peripheral tissues. The chain is Hemoglobin subunit beta (HBB) from Microtus xanthognathus (Yellow-cheeked vole).